A 338-amino-acid chain; its full sequence is MNLQRFPRYPLTFGPTPIQPLKRLSAHLGGKVELYAKREDCNSGLAFGGNKTRKLEYLIPDALAQGADTLVSIGGVQSNQTRQVAAVAAHLGMKCVLVQEHWVNYDDPVYDRVGNIQLSRMMGADVRLVADGFDIGIRRSWEDAMESVRQAGGKPYPIPAGCSEHPLGGLGFVGFAEEVREQEAQLGFRFDYVVVCSVTGSTQAGMVVGFAADGRADRVIGIDASATPERTREQITRIARHTAELVELGRPIADADVVLDTRYAGPEYGLPNDGTLEAIRLCARLEGVLTDPVYEGKSMHGMIDMVRRGEFEPGSKVLYAHLGGVPALSAYAEIFRDG.

Residue K51 is modified to N6-(pyridoxal phosphate)lysine. Catalysis depends on S78, which acts as the Nucleophile.

It belongs to the ACC deaminase/D-cysteine desulfhydrase family. As to quaternary structure, homotrimer. The cofactor is pyridoxal 5'-phosphate.

The catalysed reaction is 1-aminocyclopropane-1-carboxylate + H2O = 2-oxobutanoate + NH4(+). In terms of biological role, catalyzes a cyclopropane ring-opening reaction, the irreversible conversion of 1-aminocyclopropane-1-carboxylate (ACC) to ammonia and alpha-ketobutyrate. Allows growth on ACC as a nitrogen source. This chain is 1-aminocyclopropane-1-carboxylate deaminase, found in Burkholderia vietnamiensis (strain G4 / LMG 22486) (Burkholderia cepacia (strain R1808)).